The sequence spans 140 residues: Nucleoside diphosphate kinase (140 aa).

ATP contacts are provided by K11, F59, R87, T93, R104, and N114. Residue H117 is the Pros-phosphohistidine intermediate of the active site.

The protein belongs to the NDK family. As to quaternary structure, homotetramer. Mg(2+) is required as a cofactor.

It is found in the cytoplasm. It catalyses the reaction a 2'-deoxyribonucleoside 5'-diphosphate + ATP = a 2'-deoxyribonucleoside 5'-triphosphate + ADP. The enzyme catalyses a ribonucleoside 5'-diphosphate + ATP = a ribonucleoside 5'-triphosphate + ADP. Functionally, major role in the synthesis of nucleoside triphosphates other than ATP. The ATP gamma phosphate is transferred to the NDP beta phosphate via a ping-pong mechanism, using a phosphorylated active-site intermediate. The polypeptide is Nucleoside diphosphate kinase (Bradyrhizobium sp. (strain BTAi1 / ATCC BAA-1182)).